A 1199-amino-acid chain; its full sequence is DNA-directed RNA polymerase subunit beta' (1199 aa).

Zn(2+) contacts are provided by Cys-60, Cys-62, Cys-75, and Cys-78. The Mg(2+) site is built by Asp-449, Asp-451, and Asp-453. Cys-818, Cys-892, Cys-899, and Cys-902 together coordinate Zn(2+).

This sequence belongs to the RNA polymerase beta' chain family. In terms of assembly, the RNAP catalytic core consists of 2 alpha, 1 beta, 1 beta' and 1 omega subunit. When a sigma factor is associated with the core the holoenzyme is formed, which can initiate transcription. The cofactor is Mg(2+). It depends on Zn(2+) as a cofactor.

The enzyme catalyses RNA(n) + a ribonucleoside 5'-triphosphate = RNA(n+1) + diphosphate. Functionally, DNA-dependent RNA polymerase catalyzes the transcription of DNA into RNA using the four ribonucleoside triphosphates as substrates. The polypeptide is DNA-directed RNA polymerase subunit beta' (Geobacillus kaustophilus (strain HTA426)).